A 327-amino-acid polypeptide reads, in one-letter code: Flotillin-like protein FloA (327 aa).

A run of 2 helical transmembrane segments spans residues valine 6–valine 26 and isoleucine 28–glycine 48.

It belongs to the flotillin-like FloA family. Homooligomerizes.

It is found in the cell membrane. Its subcellular location is the membrane raft. Its function is as follows. Found in functional membrane microdomains (FMM) that may be equivalent to eukaryotic membrane rafts. FMMs are highly dynamic and increase in number as cells age. Flotillins are thought to be important factors in membrane fluidity. The polypeptide is Flotillin-like protein FloA (Priestia megaterium (strain DSM 319 / IMG 1521) (Bacillus megaterium)).